Reading from the N-terminus, the 793-residue chain is MSNQMEFIMQLYMMNLMKQQQQMQLQLPQQQQQQQLAGYTYTQNEDISSSTSVQQQQQQQQEQLQQPQPDLRKTRTHKRISSQNTNCSSSRSCSPNSNLIAFQPQQYPGATAATPSTPNSHPSNLVNQMLLQSLPPLTQLMLQQQQQQHLLTTSNLLLTPTHTPSSLGKQDPLQHPLLLGQFAGSEQMATNNFLQSSTVTSTPIEREKAATPAPSAGATAGNLSAAQVKFEQESADDDEDDDKPLSSLTSCSSSGHTNASSEKLLLSGVHPLESTTDSLDSPSMYTPVKQPADSSYGLITPVDSDLTPNTPLQPTQTISLLTPPSSEQSKSLVSLSAASGLDALLQNEEVLKNLRKVSSYLECENSLCRQENLREHFHCHEEPCQGKILSKKDDIIRHLKWHKKRKESLKLGFARFSSSDDCAPAYGEGCAYNWKQTHYHCVYEHCPKVYVSTSDVQMHANFHRKDSEIVNEGFRRFRAHETCRIEDCPFFGKKISHYHCCREGCTHTFKNKADMDKHKTYHLKDHQLKMDGFKKILKTEVCPFDACKFSTVCNHIHCVREGCDYILHSSSQMISHKRKHDRQDGEQAYQQFKIKQDVEESSLDAMPQQQQQQQQQQPTSLSQSQSSSSVCGGSNTSTPLSSLSAEHFLARKRGRPPKKIQLPADAQQSEAKRLKVEDESSNPAMLLPQSQPAAAVHPLTSGLFPGLLPAAAAPGVDPTAPNFQLTHLMALFQLQNPLFYQNLYPGMTQNSSMLGNLAALSAASAAAAAAAAANGAGVQQPKAEFSFKPEFKE.

The span at 44-53 shows a compositional bias: polar residues; the sequence is NEDISSSTSV. 3 disordered regions span residues 44–101, 199–259, and 272–296; these read NEDI…NLIA, VTST…HTNA, and LESTTDSLDSPSMYTPVKQPADSSY. Low complexity-rich tracts occupy residues 54–68, 81–98, and 210–221; these read QQQQQQQQEQLQQPQ, SSQNTNCSSSRSCSPNSN, and ATPAPSAGATAG. T211 bears the Phosphothreonine mark. S215 carries the post-translational modification Phosphoserine. Residues 233 to 242 are compositionally biased toward acidic residues; the sequence is ESADDDEDDD. Over residues 245–254 the composition is skewed to low complexity; sequence LSSLTSCSSS. Over residues 273 to 284 the composition is skewed to polar residues; that stretch reads ESTTDSLDSPSM. The segment at 377–402 adopts a C2H2-type 1; atypical zinc-finger fold; that stretch reads FHCHEEPCQGKILSKKDDIIRHLKWH. C2H2-type zinc fingers lie at residues 439–463, 498–522, and 556–580; these read YHCVYEHCPKVYVSTSDVQMHANFH, YHCCREGCTHTFKNKADMDKHKTYH, and IHCVREGCDYILHSSSQMISHKRKH. A disordered region spans residues 599-682; that stretch reads EESSLDAMPQ…RLKVEDESSN (84 aa). Low complexity predominate over residues 608-629; it reads QQQQQQQQQQPTSLSQSQSSSS. The segment covering 630 to 644 has biased composition (polar residues); the sequence is VCGGSNTSTPLSSLS. Positions 650-662 form a DNA-binding region, a.T hook; it reads ARKRGRPPKKIQL.

In terms of tissue distribution, expressed in a specific subset of neuroblasts in the ventral nerve cord and the procephalic region in the embryo. Expressed in many, if not all, late delaminating NBs, and in early NBs, but only after they have undergone several rounds of ganglion mother cell-producing divisions.

Its subcellular location is the nucleus. Transcription factor that specifies expression of key genes in developing central nervous system (CNS). Essential for many, if not all, late developing neuroblastoma (NB) sublineages. Binds to the 5'-[CG]C[CT][CT]AAAAA[AT]-3' DNA sequence, like hb, suggesting that cas and hb act as a late regulators in early and late CNS NB sublineage, respectively. Acts by repressing expression of nub/pdm-1 and pdm2/pdm-2 POU genes, and restrict their pattern of expression in appropriate cells. Required for a full expression of vvl/drifter and acj6/I-POU; it is however unknown whether it directly activates these genes. Controls engrailed (en) expression in the ventral nerve cord. The protein is Transcription factor castor (cas) of Drosophila melanogaster (Fruit fly).